Consider the following 167-residue polypeptide: Brain ribonuclease (167 aa).

The signal sequence occupies residues 1-26 (MALKSLVLLSLLVLVLLLVQVQPSLG). Residues K33 and R36 each contribute to the substrate site. Catalysis depends on H38, which acts as the Proton acceptor. 4 cysteine pairs are disulfide-bonded: C52–C110, C66–C121, C84–C136, and C91–C98. 67 to 71 (KPVNT) contacts substrate. N88 carries an N-linked (GlcNAc...) asparagine glycan. The substrate site is built by K92 and R111. Catalysis depends on H145, which acts as the Proton donor. O-linked (GalNAc...) threonine glycosylation is present at T155. Residue S159 is glycosylated (O-linked (GalNAc...) serine).

It belongs to the pancreatic ribonuclease family.

It localises to the secreted. The protein is Brain ribonuclease (BRN) of Bos taurus (Bovine).